The primary structure comprises 737 residues: ATP-dependent RNA helicase DDX50 (737 aa).

Residues 1 to 131 form a disordered region; that stretch reads MPGKLLWGDI…SDNKLEETLT (131 aa). The segment covering 11-20 has biased composition (acidic residues); that stretch reads MELEAPLEES. Composition is skewed to basic and acidic residues over residues 38–51, 67–87, and 117–131; these read HYDS…RENG, KEKL…EFSK, and STHK…ETLT. Residues S41, S82, S86, S121, and S122 each carry the phosphoserine modification. K125 participates in a covalent cross-link: Glycyl lysine isopeptide (Lys-Gly) (interchain with G-Cter in SUMO2). The Q motif motif lies at 137–165; it reads GAFSNFPISEETIKLLKGRGVTYLFPIQV. Residues 168–347 enclose the Helicase ATP-binding domain; the sequence is FGPVYEGKDL…KKYMKSRYEQ (180 aa). 181-188 contributes to the ATP binding site; sequence ARTGTGKT. The residue at position 247 (T247) is a Phosphothreonine. The DEVD box motif lies at 290-293; that stretch reads DEVD. The 145-residue stretch at 380–524 folds into the Helicase C-terminal domain; it reads DVLQVYSGSE…GVPSTMDLVK (145 aa). A Phosphoserine modification is found at S518. Positions 668–737 are disordered; the sequence is YDGNTSSNSR…RSGGHKRSFD (70 aa). Residues 673-687 are compositionally biased toward low complexity; sequence SSNSRQRSGWSSGRS. The span at 691 to 701 shows a compositional bias: gly residues; sequence GRSGGRSGGRS. Residues 702–712 are compositionally biased toward low complexity; sequence GRQSRQGSRSG. Residues 720-737 are compositionally biased toward basic residues; it reads RSGNRNRSRSGGHKRSFD.

Belongs to the DEAD box helicase family. DDX21/DDX50 subfamily. In terms of assembly, interacts with C1QBP. Interacts with the ubiquitin ligase CTLH complex through GID4. Interacts with TICAM1. In terms of tissue distribution, highest expression in skeletal muscle, liver, heart, placenta, and kidney.

The protein resides in the nucleus. It localises to the nucleolus. Its subcellular location is the cytoplasm. It catalyses the reaction ATP + H2O = ADP + phosphate + H(+). Its function is as follows. ATP-dependent RNA helicase that may play a role in various aspects of RNA metabolism including pre-mRNA splicing or ribosomal RNA production. Also acts as a viral restriction factor and promotes the activation of the NF-kappa-B and IRF3 signaling pathways following its stimulation with viral RNA or infection with RNA and DNA viruses. For instance, decreases vaccinia virus, herpes simplex virus, Zika virus or dengue virus replication during the early stage of infection. Mechanistically, acts via the adapter TICAM1 and independently of the DDX1-DDX21-DHX36 helicase complex to induce the production of interferon-beta. In Homo sapiens (Human), this protein is ATP-dependent RNA helicase DDX50 (DDX50).